The primary structure comprises 378 residues: Chaperone protein DnaJ (378 aa).

The 66-residue stretch at aspartate 5–glycine 70 folds into the J domain. The CR-type zinc-finger motif lies at glycine 133 to tyrosine 211. Residues cysteine 146, cysteine 149, cysteine 163, cysteine 166, cysteine 185, cysteine 188, cysteine 199, and cysteine 202 each contribute to the Zn(2+) site. CXXCXGXG motif repeat units follow at residues cysteine 146 to glycine 153, cysteine 163 to glycine 170, cysteine 185 to glycine 192, and cysteine 199 to glycine 206.

This sequence belongs to the DnaJ family. Homodimer. Zn(2+) is required as a cofactor.

Its subcellular location is the cytoplasm. Participates actively in the response to hyperosmotic and heat shock by preventing the aggregation of stress-denatured proteins and by disaggregating proteins, also in an autonomous, DnaK-independent fashion. Unfolded proteins bind initially to DnaJ; upon interaction with the DnaJ-bound protein, DnaK hydrolyzes its bound ATP, resulting in the formation of a stable complex. GrpE releases ADP from DnaK; ATP binding to DnaK triggers the release of the substrate protein, thus completing the reaction cycle. Several rounds of ATP-dependent interactions between DnaJ, DnaK and GrpE are required for fully efficient folding. Also involved, together with DnaK and GrpE, in the DNA replication of plasmids through activation of initiation proteins. The sequence is that of Chaperone protein DnaJ from Proteus mirabilis (strain HI4320).